The sequence spans 298 residues: Lipoyl synthase (298 aa).

Cysteine 40, cysteine 45, cysteine 51, cysteine 67, cysteine 71, cysteine 74, and serine 280 together coordinate [4Fe-4S] cluster. The 217-residue stretch at 53–269 (AVRRTATFMI…KEIAMQKGFS (217 aa)) folds into the Radical SAM core domain.

Belongs to the radical SAM superfamily. Lipoyl synthase family. Requires [4Fe-4S] cluster as cofactor.

The protein resides in the cytoplasm. The enzyme catalyses [[Fe-S] cluster scaffold protein carrying a second [4Fe-4S](2+) cluster] + N(6)-octanoyl-L-lysyl-[protein] + 2 oxidized [2Fe-2S]-[ferredoxin] + 2 S-adenosyl-L-methionine + 4 H(+) = [[Fe-S] cluster scaffold protein] + N(6)-[(R)-dihydrolipoyl]-L-lysyl-[protein] + 4 Fe(3+) + 2 hydrogen sulfide + 2 5'-deoxyadenosine + 2 L-methionine + 2 reduced [2Fe-2S]-[ferredoxin]. It functions in the pathway protein modification; protein lipoylation via endogenous pathway; protein N(6)-(lipoyl)lysine from octanoyl-[acyl-carrier-protein]. Its function is as follows. Catalyzes the radical-mediated insertion of two sulfur atoms into the C-6 and C-8 positions of the octanoyl moiety bound to the lipoyl domains of lipoate-dependent enzymes, thereby converting the octanoylated domains into lipoylated derivatives. This chain is Lipoyl synthase, found in Bacillus subtilis (strain 168).